A 335-amino-acid polypeptide reads, in one-letter code: Glycerol-3-phosphate dehydrogenase [NAD(P)+] (335 aa).

Positions 12, 13, 33, 34, and 108 each coordinate NADPH. Residues Lys108, Gly137, and Thr139 each contribute to the sn-glycerol 3-phosphate site. Residue Ala141 participates in NADPH binding. Residues Lys192, Asp245, Ser255, Arg256, and Asn257 each coordinate sn-glycerol 3-phosphate. The active-site Proton acceptor is Lys192. Arg256 contributes to the NADPH binding site. NADPH is bound at residue Glu282.

This sequence belongs to the NAD-dependent glycerol-3-phosphate dehydrogenase family.

It localises to the cytoplasm. The catalysed reaction is sn-glycerol 3-phosphate + NAD(+) = dihydroxyacetone phosphate + NADH + H(+). The enzyme catalyses sn-glycerol 3-phosphate + NADP(+) = dihydroxyacetone phosphate + NADPH + H(+). It participates in membrane lipid metabolism; glycerophospholipid metabolism. Its function is as follows. Catalyzes the reduction of the glycolytic intermediate dihydroxyacetone phosphate (DHAP) to sn-glycerol 3-phosphate (G3P), the key precursor for phospholipid synthesis. This chain is Glycerol-3-phosphate dehydrogenase [NAD(P)+], found in Methylococcus capsulatus (strain ATCC 33009 / NCIMB 11132 / Bath).